Consider the following 530-residue polypeptide: Zinc finger protein ZIC 4 (530 aa).

2 stretches are compositionally biased toward basic residues: residues 31 to 40 (HHPHHHHHPP) and 97 to 113 (NPHHRHHHHHHHHHHMA). Disordered regions lie at residues 31 to 50 (HHPHHHHHPPHLPQSVTGYP) and 87 to 138 (PGAL…SYSS). A C2H2-type 1; atypical zinc finger spans residues 284–317 (LICKWIEEDQLPKKLCSKTFSTMHELVTHVTVEH). A C2H2-type 2; atypical zinc finger spans residues 326-353 (HICFWEECPREGKPFKAKYKLVNHIRVH). C2H2-type zinc fingers lie at residues 359–383 (FPCPFPGCGKVFARSENLKIHKRTH), 389–413 (FKCEFEGCDRRFANSSDRKKHSHVH), and 419–443 (YNCKVRGCDKSYTHPSSLRKHMKVH). The disordered stretch occupies residues 432 to 530 (HPSSLRKHMK…YSNWQATNTF (99 aa)). Basic residues predominate over residues 435-444 (SLRKHMKVHC). Low complexity-rich tracts occupy residues 455–467 (SSIPSLVSPSSDS) and 474–485 (TSSQPEPPTSSQ). A compositionally biased stretch (polar residues) spans 520-530 (SYSNWQATNTF).

This sequence belongs to the GLI C2H2-type zinc-finger protein family. In terms of tissue distribution, at mid-gastrula stage (stage 11.5), weakly expressed in the prospective neural fold. Expressed in the neural plate border region at early neurula stage (stage 15) with strongest expression in the prospective regions of the hyoid and branchial crests. Expression in the dorsal central nervous system (CNS) continues through late neurula stage and early tail bud stages with expression strongest in the olfactory placode and expression levels increasing as development progresses. Becomes expressed in somites.

The protein localises to the nucleus. In terms of biological role, may bind to DNA. Induces neural and neural crest differentiation. Does not induce anterior neural tissue. The protein is Zinc finger protein ZIC 4 (zic4) of Xenopus laevis (African clawed frog).